The primary structure comprises 182 residues: Vomeronasal secretory protein 1 (182 aa).

Residues 1–18 (MRALLLIISFCLVAVLQA) form the signal peptide. Asparagine 30 carries an N-linked (GlcNAc...) asparagine glycan. Cysteine 76 and cysteine 168 are oxidised to a cystine.

This sequence belongs to the calycin superfamily. Lipocalin family. Specifically expressed in vomeronasal and posterior glands of the nasal septum, the ducts of which open into the lumen of the vomeronasal organ.

It is found in the secreted. Its function is as follows. Transport of lipophilic molecules, possible pheromone-carrier. This is Vomeronasal secretory protein 1 (Lcn3) from Mus musculus (Mouse).